A 337-amino-acid polypeptide reads, in one-letter code: MSIIVNQIVLHQLVKTSQDENTVQLKTHLRDELLPITAETEQMMLQLHQEYQNKTKAYGVFQETSNFAQILNRTLENDIDFLAFSHQSAELLRQELGKYSFANDGTLILCQYNFLATDYLFIALLDSRYSMLVDENLEIKQTHYLDITQFDIACRINLTELHLDAKSTRYLTFIKGRVGRKIADFFMDFLGAEEGLNPQVQNQCLLQAVSDYCQQADLTKEQTQAVKKQVFDYCKGQINVGEEIVVTELSANIPTLNEQSFVDFAVSQNYGLEENIPPVRTALKSLTKFSGSGKGITLSFDAELLNSRIFWDEATDSLTITGLPPNLRDQLQRQTKE.

Belongs to the YejK family.

It localises to the cytoplasm. The protein localises to the nucleoid. The sequence is that of Nucleoid-associated protein HSM_0096 from Histophilus somni (strain 2336) (Haemophilus somnus).